The chain runs to 521 residues: GMP synthase [glutamine-hydrolyzing] (521 aa).

The Glutamine amidotransferase type-1 domain maps to 9–203 (KILILDFGSQ…ISGICQCEKN (195 aa)). Cysteine 86 acts as the Nucleophile in catalysis. Active-site residues include histidine 177 and glutamate 179. Positions 204–396 (WTTDNIIAKL…LSIPPHIIYR (193 aa)) constitute a GMPS ATP-PPase domain. Residue 231-237 (SGGVDSL) participates in ATP binding.

In terms of assembly, homodimer.

The catalysed reaction is XMP + L-glutamine + ATP + H2O = GMP + L-glutamate + AMP + diphosphate + 2 H(+). Its pathway is purine metabolism; GMP biosynthesis; GMP from XMP (L-Gln route): step 1/1. Its function is as follows. Catalyzes the synthesis of GMP from XMP. This Ruthia magnifica subsp. Calyptogena magnifica protein is GMP synthase [glutamine-hydrolyzing].